Here is a 480-residue protein sequence, read N- to C-terminus: Glutamate--tRNA ligase (480 aa).

Residues 9-19 (PSPTGNLHIGT) carry the 'HIGH' region motif. The 'KMSKS' region signature appears at 250–254 (KLSKR). Residue Lys-253 participates in ATP binding.

The protein belongs to the class-I aminoacyl-tRNA synthetase family. Glutamate--tRNA ligase type 1 subfamily. In terms of assembly, monomer.

The protein resides in the cytoplasm. The catalysed reaction is tRNA(Glu) + L-glutamate + ATP = L-glutamyl-tRNA(Glu) + AMP + diphosphate. In terms of biological role, catalyzes the attachment of glutamate to tRNA(Glu) in a two-step reaction: glutamate is first activated by ATP to form Glu-AMP and then transferred to the acceptor end of tRNA(Glu). The chain is Glutamate--tRNA ligase from Microcystis aeruginosa (strain NIES-843 / IAM M-2473).